A 298-amino-acid polypeptide reads, in one-letter code: Probable GTP 3',8-cyclase (298 aa).

One can recognise a Radical SAM core domain in the interval 4-230 (KFGREIRSLR…RKKYIVDGLE (227 aa)). Arg13 is a GTP binding site. [4Fe-4S] cluster contacts are provided by Cys20 and Cys24. Tyr26 contacts S-adenosyl-L-methionine. A [4Fe-4S] cluster-binding site is contributed by Cys27. Lys61 is a GTP binding site. Gly65 is a binding site for S-adenosyl-L-methionine. Thr91 is a GTP binding site. An S-adenosyl-L-methionine-binding site is contributed by Ser115. Lys152 is a binding site for GTP. Residues Cys243 and Cys246 each coordinate [4Fe-4S] cluster. Position 248–250 (248–250 (RIR)) interacts with GTP. Cys260 is a [4Fe-4S] cluster binding site.

Belongs to the radical SAM superfamily. MoaA family. [4Fe-4S] cluster is required as a cofactor.

It catalyses the reaction GTP + AH2 + S-adenosyl-L-methionine = (8S)-3',8-cyclo-7,8-dihydroguanosine 5'-triphosphate + 5'-deoxyadenosine + L-methionine + A + H(+). It functions in the pathway cofactor biosynthesis; molybdopterin biosynthesis. In terms of biological role, catalyzes the cyclization of GTP to (8S)-3',8-cyclo-7,8-dihydroguanosine 5'-triphosphate. The sequence is that of Probable GTP 3',8-cyclase from Methanocaldococcus jannaschii (strain ATCC 43067 / DSM 2661 / JAL-1 / JCM 10045 / NBRC 100440) (Methanococcus jannaschii).